The chain runs to 80 residues: Exodeoxyribonuclease 7 small subunit (80 aa).

It belongs to the XseB family. In terms of assembly, heterooligomer composed of large and small subunits.

The protein localises to the cytoplasm. It catalyses the reaction Exonucleolytic cleavage in either 5'- to 3'- or 3'- to 5'-direction to yield nucleoside 5'-phosphates.. Functionally, bidirectionally degrades single-stranded DNA into large acid-insoluble oligonucleotides, which are then degraded further into small acid-soluble oligonucleotides. In Phenylobacterium zucineum (strain HLK1), this protein is Exodeoxyribonuclease 7 small subunit.